The primary structure comprises 60 residues: Mastoparan-V (60 aa).

Positions 1–27 are cleaved as a signal peptide; that stretch reads MKNTILILFTAFIALLGFFGMSAEALA. AXPX repeat units lie at residues 27–30, 31–34, 35–38, and 41–44; these read ADPV, ADPL, AGPN, and ADPE. A propeptide spanning residues 28–45 is cleaved from the precursor; sequence DPVADPLAGPNAEADPEA. Leu-59 bears the Leucine amide mark.

Belongs to the MCD family. Mastoparan subfamily. Expressed by the venom gland.

It localises to the secreted. The protein localises to the target cell membrane. Its function is as follows. Antimicrobial and mast cell degranulating peptide. Has broad spectrum antibacterial activity against both Gram-positive and Gram-negative bacteria (S.aureus MIC=32-64 ug/ml, S.xylosus MIC=3 ug/ml, S.alactolyticus MIC=16 ug/ml, C.koseri MIC=4 ug/ml, E.coli MIC=8 ug/ml, K.pneumoniae MIC=64 ug/ml, P.aerugiosa MIC=256 ug/ml, S.choleraesuis MIC=32 ug/ml, S.typhimurium MIC=32 ug/ml, V.parahamelytics MIC=32 ug/ml). Affects membrane permeability of E.coli. Shows hemolytic activities on sheep, chicken and human erythrocytes. Its mast cell degranulation activity may be related to the activation of G-protein coupled receptors in mast cells as well as interaction with other proteins located in cell endosomal membranes in the mast cells. This is Mastoparan-V from Vespa velutina flavitarsus (Asian hornet).